Reading from the N-terminus, the 325-residue chain is G-protein coupled receptor E6 (325 aa).

The next 7 helical transmembrane spans lie at 45–65 (LFGT…MGFF), 71–91 (FTPS…LWLM), 106–126 (IVTE…NVGM), 145–165 (PAAI…VIAV), 198–218 (LVAK…GTAL), 233–253 (AICV…LTAM), and 274–294 (VFIY…MFTG).

Belongs to the G-protein coupled receptor 1 family.

It localises to the host membrane. This Equus caballus (Horse) protein is G-protein coupled receptor E6 (E6).